The sequence spans 596 residues: Nucleotidyltransferase lcsQ (596 aa).

Residues Met-1–Asn-22 constitute a mitochondrion transit peptide. The disordered stretch occupies residues Ile-475–Asp-504.

This sequence belongs to the tRNA nucleotidyltransferase/poly(A) polymerase family.

It is found in the mitochondrion. Its function is as follows. Nucleotidyltransferase; part of the gene cluster that mediates the biosynthesis of the lipopeptide antibiotics leucinostatins that show extensive biological activities, including antimalarial, antiviral, antibacterial, antifungal, and antitumor activities, as well as phytotoxic. The function of lcsQ within the leucinostatins biosynthesis has not been identified yet. This chain is Nucleotidyltransferase lcsQ, found in Purpureocillium lilacinum (Paecilomyces lilacinus).